Here is a 625-residue protein sequence, read N- to C-terminus: MPGTKRFQHVIETPEPGKWELSGYEAAVPITEKSNPLTQDLDKADAENIVRLLGQCDAEIFQEEGQALSTYQRLYSESILTTMVQVAGKVQEVLKEPDGGLVVLSGGGTSGRMAFLMSVSFNQLMKGLGQKPLYTYLIAGGDRSVVASREGTEDSALHGIEELKKVAAGKKRVIVIGISVGLSAPFVAGQMDCCMNNTAVFLPVLVGFNPVSMARNDPIEDWSSTFRQVAERMQKMQEKQKAFVLNPAIGPEGLSGSSRMKGGSATKILLETLLLAAHKTVDQGIAASQRCLLEILRTFERAHQVTYSQSPKIATLMKSVSTSLEKKGHVYLVGWQTLGIIAIMDGVECIHTFGADFRDVRGFLIGDHSDMFNQKAELTNQGPQFTFSQEDFLTSILPSLTEIDTVVFIFTLDDNLTEVQTIVEQVKEKTNHIQALAHSTVGQTLPIPLKKLFPSIISITWPLLFFEYEGNFIQKFQRELSTKWVLNTVSTGAHVLLGKILQNHMLDLRISNSKLFWRALAMLQRFSGQSKARCIESLLRAIHFPQPLSDDIRAAPISCHVQVAHEKEQVIPIALLSLLFRCSITEAQAHLAAAPSVCEAVRSALAGPGQKRTADPLEILEPDVQ.

SIS domains are found at residues 90-286 (VQEV…QGIA) and 320-499 (VSTS…LLGK). Beta-D-fructose 1-phosphate-binding positions include 109-110 (TS), glutamate 153, and 179-181 (SVG). Residue 109–110 (TS) participates in beta-D-fructose 6-phosphate binding. A beta-D-fructose 6-phosphate-binding site is contributed by 179–181 (SVG). Positions 199–200 (AV) are important for interaction with GCK. Position 348 (glutamate 348) interacts with beta-D-fructose 1-phosphate. Residues 463-465 (LLF) are essential for interaction with GCK. A beta-D-fructose 1-phosphate-binding site is contributed by lysine 514. Residue lysine 514 coordinates beta-D-fructose 6-phosphate.

The protein belongs to the GCKR family. In terms of assembly, interacts (fructose 6-phosphate bound form) with GCK. As to expression, found in liver and pancreas. Not detected in muscle, brain, heart, thymus, intestine, uterus, adipose tissue, kidney, adrenal, lung or spleen.

It is found in the cytoplasm. The protein resides in the nucleus. Its subcellular location is the mitochondrion. Functionally, regulates glucokinase (GCK) by forming an inactive complex with this enzyme. Acts by promoting GCK recruitment to the nucleus, possibly to provide a reserve of GCK that can be quickly released in the cytoplasm after a meal. The affinity of GCKR for GCK is modulated by fructose metabolites: GCKR with bound fructose 6-phosphate has increased affinity for GCK, while GCKR with bound fructose 1-phosphate has strongly decreased affinity for GCK and does not inhibit GCK activity. The chain is Glucokinase regulatory protein from Homo sapiens (Human).